Consider the following 1486-residue polypeptide: Protein PRRC2B (1486 aa).

5 disordered regions span residues 1-20 (MSDR…KYST), 39-306 (VIPR…FPLP), 320-341 (QMND…PLRQ), 385-519 (KFSD…AREE), and 531-658 (LDQK…EQLY). Polar residues predominate over residues 88-137 (ANKQDQQDPKSSSVTASQPPESQPQPGLQKSVSNLQKPTQSISQENTNSV). 4 positions are modified to phosphoserine: Ser-166, Ser-168, Ser-222, and Ser-226. Residues 219-235 (SAASLSASPTELGSRNA) are compositionally biased toward polar residues. Position 228 is a phosphothreonine (Thr-228). Lys-251 is covalently cross-linked (Glycyl lysine isopeptide (Lys-Gly) (interchain with G-Cter in SUMO2)). Residues 288 to 300 (SPQSSENQTTVER) are compositionally biased toward polar residues. Ser-387 and Ser-415 each carry phosphoserine. Composition is skewed to basic and acidic residues over residues 422 to 433 (TDAKRTQEEGKD), 478 to 488 (HSAEDKEDKPP), and 501 to 519 (AVER…AREE). The residue at position 479 (Ser-479) is a Phosphoserine. Residues 494 to 544 (IQSEMSEAVERARKRREEEERRAREERLAACAAKLKQLDQKCRQAQKANET) adopt a coiled-coil conformation. Ser-555 is modified (phosphoserine). The span at 600 to 611 (SNSSSSSSSSSS) shows a compositional bias: low complexity. Residue Ser-621 is modified to Phosphoserine. A compositionally biased stretch (low complexity) spans 638 to 656 (QRQQQQQQQQQQQQQQQEQ). Lys-751 participates in a covalent cross-link: Glycyl lysine isopeptide (Lys-Gly) (interchain with G-Cter in SUMO2). Thr-753 carries the phosphothreonine modification. Residues Ser-762 and Ser-793 each carry the phosphoserine modification. Disordered regions lie at residues 792–847 (RSPD…EARK), 893–918 (EERR…IPPR), and 950–1080 (ALPV…PGAV). Positions 880-904 (IEVLTKKQRRLLEEERRKKEQAAQV) form a coiled coil. Residues 960-986 (SWRTAVTAFSSTEPGTSEQGFKSSQGD) are compositionally biased toward polar residues. Over residues 998–1007 (SSATSSQRSS) the composition is skewed to low complexity. Basic and acidic residues-rich tracts occupy residues 1025–1055 (SKAD…EHRP) and 1062–1074 (RSLK…EGAE). A phosphoserine mark is found at Ser-1070 and Ser-1159. Disordered regions lie at residues 1177–1205 (KAWE…SSVG), 1410–1443 (QSIQ…TSRE), and 1455–1486 (ADSK…AWEP). Residues 1181–1191 (NSPSLPEQSSP) show a composition bias toward polar residues. Residues 1410-1421 (QSIQLPPGQSLS) show a composition bias toward low complexity. Positions 1457 to 1474 (SKQNVPTGGSAPSPQAYR) are enriched in polar residues.

This chain is Protein PRRC2B (Prrc2b), found in Mus musculus (Mouse).